A 222-amino-acid polypeptide reads, in one-letter code: Peptide methionine sulfoxide reductase MsrA 2 (222 aa).

Cys56 is an active-site residue.

This sequence belongs to the MsrA Met sulfoxide reductase family.

The catalysed reaction is L-methionyl-[protein] + [thioredoxin]-disulfide + H2O = L-methionyl-(S)-S-oxide-[protein] + [thioredoxin]-dithiol. It carries out the reaction [thioredoxin]-disulfide + L-methionine + H2O = L-methionine (S)-S-oxide + [thioredoxin]-dithiol. Its function is as follows. Has an important function as a repair enzyme for proteins that have been inactivated by oxidation. Catalyzes the reversible oxidation-reduction of methionine sulfoxide in proteins to methionine. This is Peptide methionine sulfoxide reductase MsrA 2 (msrA2) from Nostoc sp. (strain PCC 7120 / SAG 25.82 / UTEX 2576).